We begin with the raw amino-acid sequence, 365 residues long: Histidinol-phosphate aminotransferase (365 aa).

Residues 1–22 are disordered; it reads MSRPVPNPGILDIAPYTPGKSP. Lys-221 bears the N6-(pyridoxal phosphate)lysine mark.

The protein belongs to the class-II pyridoxal-phosphate-dependent aminotransferase family. Histidinol-phosphate aminotransferase subfamily. As to quaternary structure, homodimer. Pyridoxal 5'-phosphate is required as a cofactor.

It carries out the reaction L-histidinol phosphate + 2-oxoglutarate = 3-(imidazol-4-yl)-2-oxopropyl phosphate + L-glutamate. It participates in amino-acid biosynthesis; L-histidine biosynthesis; L-histidine from 5-phospho-alpha-D-ribose 1-diphosphate: step 7/9. This Rhodopseudomonas palustris (strain BisB5) protein is Histidinol-phosphate aminotransferase.